The primary structure comprises 394 residues: Aromatic-amino-acid aminotransferase (394 aa).

4 residues coordinate substrate: G34, Y65, W127, and N180. Residue K243 is modified to N6-(pyridoxal phosphate)lysine. R371 is a binding site for substrate.

This sequence belongs to the class-I pyridoxal-phosphate-dependent aminotransferase family. As to quaternary structure, homodimer. Requires pyridoxal 5'-phosphate as cofactor.

It localises to the cytoplasm. The catalysed reaction is an aromatic L-alpha-amino acid + 2-oxoglutarate = an aromatic oxo-acid + L-glutamate. Shows activities toward both dicarboxylic and aromatic substrates. In Paracoccus denitrificans, this protein is Aromatic-amino-acid aminotransferase (tyrB).